Reading from the N-terminus, the 518-residue chain is Zinc finger protein 449 (518 aa).

The 83-residue stretch at 30 to 112 (RQRFRQFQYR…SLIEDLQREL (83 aa)) folds into the SCAN box domain. A compositionally biased stretch (polar residues) spans 292 to 304 (NPTLGETPENSNL). Positions 292–325 (NPTLGETPENSNLEEPLNPKPHKKKSPGEKPHRC) are disordered. C2H2-type zinc fingers lie at residues 323-345 (HRCPQCGKCFARKSQLTGHQRIH), 351-373 (HKCPECGKRFLRSSDLYRHQRLH), 379-401 (YECTVCKKRFTRRSHLIGHQRTH), 407-429 (YKCLECGKSFCHGSSLKRHLKTH), 435-457 (HRCHNCGKSFSRLTALTLHQRTH), 463-485 (FKCNYCGKSFRQRPSLVIHLRIH), and 491-513 (YKCTHCSKSFRQRAGLIMHQVTH).

This sequence belongs to the krueppel C2H2-type zinc-finger protein family.

It is found in the nucleus. Its function is as follows. May be involved in transcriptional regulation. In Gorilla gorilla gorilla (Western lowland gorilla), this protein is Zinc finger protein 449 (ZNF449).